Consider the following 111-residue polypeptide: Large ribosomal subunit protein uL22 (111 aa).

Belongs to the universal ribosomal protein uL22 family. As to quaternary structure, part of the 50S ribosomal subunit.

Its function is as follows. This protein binds specifically to 23S rRNA; its binding is stimulated by other ribosomal proteins, e.g. L4, L17, and L20. It is important during the early stages of 50S assembly. It makes multiple contacts with different domains of the 23S rRNA in the assembled 50S subunit and ribosome. Functionally, the globular domain of the protein is located near the polypeptide exit tunnel on the outside of the subunit, while an extended beta-hairpin is found that lines the wall of the exit tunnel in the center of the 70S ribosome. The protein is Large ribosomal subunit protein uL22 of Francisella tularensis subsp. tularensis (strain FSC 198).